The sequence spans 103 residues: RNA-binding protein Hfq (103 aa).

Residues 9–68 (DPFLNALRRERVPVSIYLVNGIKLQGQIESFDQFVILLKNTVSQMVYKHAISTVVPSRPV) form the Sm domain. The interval 63-103 (VPSRPVSHHSNNAGGGTGSNFHHGSNAQGSSAPAQDSDETE) is disordered. The span at 81 to 96 (SNFHHGSNAQGSSAPA) shows a compositional bias: polar residues.

It belongs to the Hfq family. In terms of assembly, homohexamer.

In terms of biological role, RNA chaperone that binds small regulatory RNA (sRNAs) and mRNAs to facilitate mRNA translational regulation in response to envelope stress, environmental stress and changes in metabolite concentrations. Also binds with high specificity to tRNAs. In Enterobacter sp. (strain 638), this protein is RNA-binding protein Hfq.